Here is a 116-residue protein sequence, read N- to C-terminus: Large ribosomal subunit protein bL20 (116 aa).

The protein belongs to the bacterial ribosomal protein bL20 family.

In terms of biological role, binds directly to 23S ribosomal RNA and is necessary for the in vitro assembly process of the 50S ribosomal subunit. It is not involved in the protein synthesizing functions of that subunit. The chain is Large ribosomal subunit protein bL20 from Mycoplasmopsis pulmonis (strain UAB CTIP) (Mycoplasma pulmonis).